Here is a 545-residue protein sequence, read N- to C-terminus: CTP synthase (545 aa).

The tract at residues 1–266 is amidoligase domain; it reads MTTNYIFVTG…DDYICKRFSL (266 aa). Residue Ser14 participates in CTP binding. Ser14 is a UTP binding site. ATP contacts are provided by residues 15-20 and Asp72; that span reads SLGKGI. Mg(2+) contacts are provided by Asp72 and Glu140. CTP-binding positions include 147–149, 187–192, and Lys223; these read DIE and KTKPTQ. UTP is bound by residues 187–192 and Lys223; that span reads KTKPTQ. 239 to 241 serves as a coordination point for ATP; sequence KDV. The 252-residue stretch at 291-542 folds into the Glutamine amidotransferase type-1 domain; the sequence is TIGMIGKYVE…VKAAGDYQKR (252 aa). Position 352 (Gly352) interacts with L-glutamine. Residue Cys379 is the Nucleophile; for glutamine hydrolysis of the active site. L-glutamine is bound by residues 380–383, Glu403, and Arg470; that span reads LGMQ. Residues His515 and Glu517 contribute to the active site.

This sequence belongs to the CTP synthase family. Homotetramer.

The enzyme catalyses UTP + L-glutamine + ATP + H2O = CTP + L-glutamate + ADP + phosphate + 2 H(+). The catalysed reaction is L-glutamine + H2O = L-glutamate + NH4(+). It carries out the reaction UTP + NH4(+) + ATP = CTP + ADP + phosphate + 2 H(+). The protein operates within pyrimidine metabolism; CTP biosynthesis via de novo pathway; CTP from UDP: step 2/2. Allosterically activated by GTP, when glutamine is the substrate; GTP has no effect on the reaction when ammonia is the substrate. The allosteric effector GTP functions by stabilizing the protein conformation that binds the tetrahedral intermediate(s) formed during glutamine hydrolysis. Inhibited by the product CTP, via allosteric rather than competitive inhibition. Catalyzes the ATP-dependent amination of UTP to CTP with either L-glutamine or ammonia as the source of nitrogen. Regulates intracellular CTP levels through interactions with the four ribonucleotide triphosphates. The chain is CTP synthase from Yersinia pseudotuberculosis serotype O:1b (strain IP 31758).